Here is a 589-residue protein sequence, read N- to C-terminus: RNA-directed RNA polymerase subunit beta (589 aa).

Residues 259–391 form the RdRp catalytic domain; that stretch reads RRAHEGSVTN…TNTKKTFSEG (133 aa). Residues Asp274, Asp359, and Asp360 each contribute to the Mg(2+) site.

In terms of assembly, homodimer; the replicase complex can dimerize. Part of the viral RNA-dependent RNA polymerase complex, the other subunits are the host ribosomal protein S1, EF-Tu and EF-Ts. S1 is needed for the initiation of genomic RNA (+)-strand replication. Mg(2+) is required as a cofactor.

It carries out the reaction RNA(n) + a ribonucleoside 5'-triphosphate = RNA(n+1) + diphosphate. Its function is as follows. This is the catalytic subunit of the viral RNA-dependent RNA polymerase complex. This complex is involved in viral RNA replication that produces (+)-stranded genomes via a complementary, (-)-stranded intermediate. Binds RNA cooperatively with the host ribosomal protein S1. The protein is RNA-directed RNA polymerase subunit beta of Escherichia coli (Bacteriophage Q-beta).